We begin with the raw amino-acid sequence, 547 residues long: Aspartate 1-decarboxylase (547 aa).

Lysine 338 carries the post-translational modification N6-(pyridoxal phosphate)lysine.

The protein belongs to the group II decarboxylase family. Pyridoxal 5'-phosphate serves as cofactor.

The catalysed reaction is L-aspartate + H(+) = beta-alanine + CO2. The protein operates within cofactor biosynthesis; (R)-pantothenate biosynthesis; beta-alanine from L-aspartate: step 1/1. In terms of biological role, catalyzes the pyridoxal-dependent decarboxylation of aspartate to produce beta-alanine. Has weak activity with glutamate. The sequence is that of Aspartate 1-decarboxylase from Aliivibrio fischeri (strain ATCC 700601 / ES114) (Vibrio fischeri).